A 442-amino-acid chain; its full sequence is MENAKMTSLIAQYPLVEDLIALKETTWFNPGTTSLAEGLPYVGLTAQDVQDAHARLARFAPYLAKAFPETAATGGIIESELAIIPAMQQRLEKEYGQKISGELLLKKDSHLPISGSIKARGGIYEVLAHAEKLALEAGLLTTEDDYSVMLSPEFRQFFSQYSIAVGSTGNLGLSIGIMSACIGFKVTVHMSADARAWKKAKLRSHGVTVVEYEEDYGVAVEQGRKAAQSDPNCFFIDDENSRTLFLGYAVAGQRLKAQFAQQGRVVDADHPLFVYLPCGVGGGPGGVAFGLKLAFGDNVHCFFAEPTHSPCMLLGVYTGLHDAISVQEIGVDNLTAADGLAVGRASGFVGRAMERLLDGLYTLDDRTMYDMLGWLAQEEGIRLEPSALAGMAGPQRVCRSTDYQQMHAFSAEQLNHATHLVWATGGGMVPEEEMAQYLAKGR.

K118 is modified (N6-(pyridoxal phosphate)lysine).

Belongs to the serine/threonine dehydratase family. DsdA subfamily. As to quaternary structure, monomer. The cofactor is pyridoxal 5'-phosphate.

The enzyme catalyses D-serine = pyruvate + NH4(+). This is D-serine dehydratase from Citrobacter koseri (strain ATCC BAA-895 / CDC 4225-83 / SGSC4696).